Consider the following 219-residue polypeptide: N-(5'-phosphoribosyl)anthranilate isomerase (219 aa).

It belongs to the TrpF family.

It carries out the reaction N-(5-phospho-beta-D-ribosyl)anthranilate = 1-(2-carboxyphenylamino)-1-deoxy-D-ribulose 5-phosphate. It functions in the pathway amino-acid biosynthesis; L-tryptophan biosynthesis; L-tryptophan from chorismate: step 3/5. This Bradyrhizobium sp. (strain BTAi1 / ATCC BAA-1182) protein is N-(5'-phosphoribosyl)anthranilate isomerase.